Reading from the N-terminus, the 243-residue chain is MTLYFAYPNAESGDCKCLGLIFFVKDYYGEKVFPPIGCVGITQFENQASKTNYFSNVDKARSLQKRFMEEAGVDVVGRVKALLQSIVPPGLPVRLAQEDGKSYFAGLLRLINSSALIHADYGPFDGPGWEIGAIKAQLTWNILLKEVRGGESVVYNRFWKGKEDDDKYRDVTKSYGYSRDVIDGCESKKIAPIVGQIALFNPRNFHEVLAIENPEKVSRYTFSSFIGYLPPTAPEGPAIILWS.

Its function is as follows. Part of the gene cluster that mediates the biosynthesis of the lipopeptide antibiotics leucinostatins that show extensive biological activities, including antimalarial, antiviral, antibacterial, antifungal, and antitumor activities, as well as phytotoxic. The function of lcsS within the leucinostatins biosynthesis has not been identified yet. This is Leucinostatins biosynthesis cluster protein S from Purpureocillium lilacinum (Paecilomyces lilacinus).